A 116-amino-acid polypeptide reads, in one-letter code: Phosphoribosyl-AMP cyclohydrolase (116 aa).

Asp85 serves as a coordination point for Mg(2+). Cys86 lines the Zn(2+) pocket. Mg(2+)-binding residues include Asp87 and Asp89. The Zn(2+) site is built by Cys102 and Cys109.

The protein belongs to the PRA-CH family. As to quaternary structure, homodimer. It depends on Mg(2+) as a cofactor. Requires Zn(2+) as cofactor.

Its subcellular location is the cytoplasm. It catalyses the reaction 1-(5-phospho-beta-D-ribosyl)-5'-AMP + H2O = 1-(5-phospho-beta-D-ribosyl)-5-[(5-phospho-beta-D-ribosylamino)methylideneamino]imidazole-4-carboxamide. It functions in the pathway amino-acid biosynthesis; L-histidine biosynthesis; L-histidine from 5-phospho-alpha-D-ribose 1-diphosphate: step 3/9. In terms of biological role, catalyzes the hydrolysis of the adenine ring of phosphoribosyl-AMP. The protein is Phosphoribosyl-AMP cyclohydrolase of Thermobifida fusca (strain YX).